Consider the following 323-residue polypeptide: Staphylococcal-like nuclease CAN1 (323 aa).

Residue glycine 2 is the site of N-myristoyl glycine attachment. A lipid anchor (S-palmitoyl cysteine) is attached at cysteine 11. The 177-residue stretch at 130–306 (NTLPVDTKSV…RQKRVGLWAS (177 aa)) folds into the TNase-like domain. Aspartate 143 is a Ca(2+) binding site. Arginine 213 is an active-site residue. Position 218 (aspartate 218) interacts with Ca(2+). Catalysis depends on residues glutamate 221 and arginine 255.

This sequence belongs to the thermonuclease family. The cofactor is Ca(2+).

The protein localises to the cell membrane. Its activity is regulated as follows. Inhibited by Zn(2+). In terms of biological role, enzyme that catalyzes the hydrolysis of both DNA and RNA at the 5' position of the phosphodiester bond. Possesses activity toward the single-stranded DNA, double-stranded DNA and RNA. May be involved in genomic DNA degradation during programmed cell death. The polypeptide is Staphylococcal-like nuclease CAN1 (CAN1) (Arabidopsis thaliana (Mouse-ear cress)).